A 688-amino-acid chain; its full sequence is Probable glucan endo-1,3-beta-glucosidase btgC (688 aa).

Disordered regions lie at residues 1–91 (MSGP…NLGP), 126–148 (ANIPAERGLSTTGSDNPYVPEPP), and 168–195 (GQLTPGQSVSHLSSTNPSQRNLYDIPYQ). At 1-307 (MSGPNRTYSF…PKPGGGNKKR (307 aa)) the chain is on the cytoplasmic side. Positions 175–188 (SVSHLSSTNPSQRN) are enriched in polar residues. Residues 308 to 328 (GWIVGAILAFIIIGAIVGGAV) traverse the membrane as a helical; Signal-anchor for type II membrane protein segment. Over 329-688 (GGTIGHRGNE…IPDCGGKTAT (360 aa)) the chain is Extracellular. The tract at residues 334-363 (HRGNEEPSSASSASSSSTQTATEDTSVNGD) is disordered. Over residues 341–355 (SSASSASSSSTQTAT) the composition is skewed to low complexity. N-linked (GlcNAc...) asparagine glycosylation is found at Asn408, Asn431, and Asn459. Glu491 acts as the Proton donor in catalysis. Glu590 functions as the Nucleophile in the catalytic mechanism. 2 N-linked (GlcNAc...) asparagine glycosylation sites follow: Asn609 and Asn635.

The protein belongs to the glycosyl hydrolase 17 family.

Its subcellular location is the cell membrane. It carries out the reaction Hydrolysis of (1-&gt;3)-beta-D-glucosidic linkages in (1-&gt;3)-beta-D-glucans.. In terms of biological role, glucanases play a role in cell expansion during growth, in cell-cell fusion during mating, and in spore release during sporulation. This enzyme may be involved in beta-glucan degradation. Active on laminarin and lichenan. The protein is Probable glucan endo-1,3-beta-glucosidase btgC (btgC) of Aspergillus fumigatus (strain ATCC MYA-4609 / CBS 101355 / FGSC A1100 / Af293) (Neosartorya fumigata).